The primary structure comprises 567 residues: 2-succinyl-5-enolpyruvyl-6-hydroxy-3-cyclohexene-1-carboxylate synthase (567 aa).

Belongs to the TPP enzyme family. MenD subfamily. In terms of assembly, homodimer. Mg(2+) serves as cofactor. Requires Mn(2+) as cofactor. Thiamine diphosphate is required as a cofactor.

It catalyses the reaction isochorismate + 2-oxoglutarate + H(+) = 5-enolpyruvoyl-6-hydroxy-2-succinyl-cyclohex-3-ene-1-carboxylate + CO2. The protein operates within quinol/quinone metabolism; 1,4-dihydroxy-2-naphthoate biosynthesis; 1,4-dihydroxy-2-naphthoate from chorismate: step 2/7. It participates in quinol/quinone metabolism; menaquinone biosynthesis. Catalyzes the thiamine diphosphate-dependent decarboxylation of 2-oxoglutarate and the subsequent addition of the resulting succinic semialdehyde-thiamine pyrophosphate anion to isochorismate to yield 2-succinyl-5-enolpyruvyl-6-hydroxy-3-cyclohexene-1-carboxylate (SEPHCHC). This is 2-succinyl-5-enolpyruvyl-6-hydroxy-3-cyclohexene-1-carboxylate synthase from Yersinia pestis bv. Antiqua (strain Antiqua).